Reading from the N-terminus, the 281-residue chain is Diaminopimelate epimerase (281 aa).

Asn-13, Gln-46, and Asn-66 together coordinate substrate. The active-site Proton donor is the Cys-75. Substrate-binding positions include 76–77 (GN), Asn-160, Asn-193, and 211–212 (ER). Cys-220 (proton acceptor) is an active-site residue. 221–222 (GT) is a substrate binding site.

Belongs to the diaminopimelate epimerase family. In terms of assembly, homodimer.

The protein resides in the cytoplasm. It catalyses the reaction (2S,6S)-2,6-diaminopimelate = meso-2,6-diaminopimelate. It functions in the pathway amino-acid biosynthesis; L-lysine biosynthesis via DAP pathway; DL-2,6-diaminopimelate from LL-2,6-diaminopimelate: step 1/1. Its function is as follows. Catalyzes the stereoinversion of LL-2,6-diaminopimelate (L,L-DAP) to meso-diaminopimelate (meso-DAP), a precursor of L-lysine and an essential component of the bacterial peptidoglycan. The protein is Diaminopimelate epimerase of Acinetobacter baumannii (strain AB307-0294).